Here is a 382-residue protein sequence, read N- to C-terminus: Ribosomal RNA large subunit methyltransferase G (382 aa).

This sequence belongs to the methyltransferase superfamily. RlmG family.

It localises to the cytoplasm. It catalyses the reaction guanosine(1835) in 23S rRNA + S-adenosyl-L-methionine = N(2)-methylguanosine(1835) in 23S rRNA + S-adenosyl-L-homocysteine + H(+). In terms of biological role, specifically methylates the guanine in position 1835 (m2G1835) of 23S rRNA. The chain is Ribosomal RNA large subunit methyltransferase G from Aliivibrio salmonicida (strain LFI1238) (Vibrio salmonicida (strain LFI1238)).